The chain runs to 541 residues: Membrane protein insertase YidC (541 aa).

Transmembrane regions (helical) follow at residues asparagine 6–aspartate 26, leucine 325–phenylalanine 345, phenylalanine 349–phenylalanine 369, glycine 420–leucine 440, leucine 457–methionine 477, and valine 500–glycine 520.

The protein belongs to the OXA1/ALB3/YidC family. Type 1 subfamily. As to quaternary structure, interacts with the Sec translocase complex via SecD. Specifically interacts with transmembrane segments of nascent integral membrane proteins during membrane integration.

It is found in the cell inner membrane. Functionally, required for the insertion and/or proper folding and/or complex formation of integral membrane proteins into the membrane. Involved in integration of membrane proteins that insert both dependently and independently of the Sec translocase complex, as well as at least some lipoproteins. Aids folding of multispanning membrane proteins. The sequence is that of Membrane protein insertase YidC from Shewanella sp. (strain W3-18-1).